The chain runs to 169 residues: uncharacterized protein (169 aa).

One can recognise a Nudix hydrolase domain in the interval 28–157; the sequence is ELHLVVHVCI…EFIPYFFLNQ (130 aa). The Nudix box motif lies at 65 to 87; that stretch reads AGSALKGETSRQAAEREVKEELG. Residues E81 and E85 each contribute to the Mg(2+) site.

Belongs to the Nudix hydrolase family. Mg(2+) serves as cofactor.

This is an uncharacterized protein from Listeria innocua serovar 6a (strain ATCC BAA-680 / CLIP 11262).